The sequence spans 156 residues: Flagellar assembly factor FliW (156 aa).

This sequence belongs to the FliW family. As to quaternary structure, interacts with translational regulator CsrA and flagellin(s).

The protein localises to the cytoplasm. Acts as an anti-CsrA protein, binds CsrA and prevents it from repressing translation of its target genes, one of which is flagellin. Binds to flagellin and participates in the assembly of the flagellum. The sequence is that of Flagellar assembly factor FliW from Pseudothermotoga lettingae (strain ATCC BAA-301 / DSM 14385 / NBRC 107922 / TMO) (Thermotoga lettingae).